The following is a 675-amino-acid chain: MHHVNKYFNQTMVIEALKMSFYKLNLKQLIKNPIMFVVEVGMILTLILICFPDIFGTSYLSRGYLITIFIILLITILFANFSEAFAEGRGKAQADSLRQAQSNLTARLIEENGAYRIVNATELKAGQNIRVENGETIPADGVVINGLATVDESAITGESAPVIKESGGDFDGVIGGTLVTSDWLEIRVESEAGTSFLDKMIALVEGAERNKTPNEIALFTLLTTLTIIFLVVIVTLYPIASYLHLILPIAMLIALTVCLIPTTIGGLLSAIGIAGMDRVTQFNVLAKSGRAVEVCGDVDVMILDKTGTITYGNRIASEFLPVNQQMLEKLIVAAYMSSIYDDTPEGKSIVRLAKQMYINELPKDIDGTYKPFTAETRMSGIITNEISVFKGAPNSMINLVKQQQGNIPLNIESLCMDVSSKGGTPLIVIENNVMLGVIYLKDVIKDGLVERFTELRKMGIETVMCTGDNALTAATIAKEAGVDRFVAECKPEDKIKVIKDEQAKGHIVAMTGDGTNDAPALAQANIGLAMNSGTISAKEAANLIDLDSNPTKLIEVVKIGKQLLMTRGALTTFSLANDVAKYFAILPALMMSTIPEMTSLNIMHLSSPKSAIISALIFNALIIVALIPIAMKGVKVKGYSIDRIFINNMLIYGLGGLIVPFLGIKLIDMIVQFFV.

A run of 4 helical transmembrane segments spans residues 34–54 (IMFV…FPDI), 65–85 (LITI…SEAF), 216–236 (IALF…IVTL), and 245–265 (LILP…TTIG). Aspartate 304 serves as the catalytic 4-aspartylphosphate intermediate. ATP is bound by residues aspartate 341, glutamate 345, 372 to 379 (FTAETRMS), and lysine 390. Mg(2+) contacts are provided by aspartate 513 and aspartate 517. The next 3 helical transmembrane spans lie at 569–591 (ALTT…ALMM), 611–631 (AIIS…PIAM), and 644–664 (IFIN…FLGI).

The protein belongs to the cation transport ATPase (P-type) (TC 3.A.3) family. Type IA subfamily. As to quaternary structure, the system is composed of three essential subunits: KdpA, KdpB and KdpC.

The protein localises to the cell membrane. It catalyses the reaction K(+)(out) + ATP + H2O = K(+)(in) + ADP + phosphate + H(+). In terms of biological role, part of the high-affinity ATP-driven potassium transport (or Kdp) system, which catalyzes the hydrolysis of ATP coupled with the electrogenic transport of potassium into the cytoplasm. This subunit is responsible for energy coupling to the transport system and for the release of the potassium ions to the cytoplasm. The polypeptide is Potassium-transporting ATPase ATP-binding subunit (Staphylococcus aureus (strain Newman)).